The primary structure comprises 336 residues: tRNA N6-adenosine threonylcarbamoyltransferase (336 aa).

Fe cation contacts are provided by histidine 111 and histidine 115. Substrate is bound by residues leucine 134–glycine 138, aspartate 167, glycine 180, and asparagine 271. Aspartate 299 provides a ligand contact to Fe cation.

Belongs to the KAE1 / TsaD family. Fe(2+) serves as cofactor.

Its subcellular location is the cytoplasm. The enzyme catalyses L-threonylcarbamoyladenylate + adenosine(37) in tRNA = N(6)-L-threonylcarbamoyladenosine(37) in tRNA + AMP + H(+). In terms of biological role, required for the formation of a threonylcarbamoyl group on adenosine at position 37 (t(6)A37) in tRNAs that read codons beginning with adenine. Is involved in the transfer of the threonylcarbamoyl moiety of threonylcarbamoyl-AMP (TC-AMP) to the N6 group of A37, together with TsaE and TsaB. TsaD likely plays a direct catalytic role in this reaction. The polypeptide is tRNA N6-adenosine threonylcarbamoyltransferase (Thioalkalivibrio sulfidiphilus (strain HL-EbGR7)).